Consider the following 498-residue polypeptide: Glycerol kinase (498 aa).

Threonine 14 contributes to the ADP binding site. Positions 14, 15, and 16 each coordinate ATP. Threonine 14 contributes to the sn-glycerol 3-phosphate binding site. Residue arginine 18 coordinates ADP. Residues arginine 84, glutamate 85, and tyrosine 136 each contribute to the sn-glycerol 3-phosphate site. Arginine 84, glutamate 85, and tyrosine 136 together coordinate glycerol. A Phosphohistidine; by HPr modification is found at histidine 232. Aspartate 246 is a sn-glycerol 3-phosphate binding site. 2 residues coordinate glycerol: aspartate 246 and glutamine 247. Residues threonine 268 and glycine 311 each contribute to the ADP site. ATP contacts are provided by threonine 268, glycine 311, glutamine 315, and glycine 412. ADP is bound by residues glycine 412 and asparagine 416.

This sequence belongs to the FGGY kinase family. Homotetramer and homodimer (in equilibrium). The phosphoenolpyruvate-dependent sugar phosphotransferase system (PTS), including enzyme I, and histidine-containing protein (HPr) are required for the phosphorylation, which leads to the activation of the enzyme.

It catalyses the reaction glycerol + ATP = sn-glycerol 3-phosphate + ADP + H(+). The protein operates within polyol metabolism; glycerol degradation via glycerol kinase pathway; sn-glycerol 3-phosphate from glycerol: step 1/1. Activated by phosphorylation and inhibited by fructose 1,6-bisphosphate (FBP). Functionally, key enzyme in the regulation of glycerol uptake and metabolism. Catalyzes the phosphorylation of glycerol to yield sn-glycerol 3-phosphate. In Lactococcus lactis subsp. lactis (strain IL1403) (Streptococcus lactis), this protein is Glycerol kinase.